The following is a 154-amino-acid chain: Ribonuclease H (154 aa).

The 142-residue stretch at 3–144 (ELPVVTIYTD…ADQLARDGIV (142 aa)) folds into the RNase H type-1 domain. Mg(2+) contacts are provided by Asp12, Glu50, Asp72, and Asp136.

The protein belongs to the RNase H family. In terms of assembly, monomer. It depends on Mg(2+) as a cofactor.

It is found in the cytoplasm. The catalysed reaction is Endonucleolytic cleavage to 5'-phosphomonoester.. Endonuclease that specifically degrades the RNA of RNA-DNA hybrids. This is Ribonuclease H from Bradyrhizobium diazoefficiens (strain JCM 10833 / BCRC 13528 / IAM 13628 / NBRC 14792 / USDA 110).